We begin with the raw amino-acid sequence, 348 residues long: UDP-3-O-acylglucosamine N-acyltransferase (348 aa).

Residue His-241 is the Proton acceptor of the active site.

The protein belongs to the transferase hexapeptide repeat family. LpxD subfamily. Homotrimer.

It catalyses the reaction a UDP-3-O-[(3R)-3-hydroxyacyl]-alpha-D-glucosamine + a (3R)-hydroxyacyl-[ACP] = a UDP-2-N,3-O-bis[(3R)-3-hydroxyacyl]-alpha-D-glucosamine + holo-[ACP] + H(+). Its pathway is bacterial outer membrane biogenesis; LPS lipid A biosynthesis. Catalyzes the N-acylation of UDP-3-O-acylglucosamine using 3-hydroxyacyl-ACP as the acyl donor. Is involved in the biosynthesis of lipid A, a phosphorylated glycolipid that anchors the lipopolysaccharide to the outer membrane of the cell. This Neisseria meningitidis serogroup C (strain 053442) protein is UDP-3-O-acylglucosamine N-acyltransferase.